Reading from the N-terminus, the 516-residue chain is Arginyl-tRNA--protein transferase 1 (516 aa).

Over residues Ile-150–Gly-180 the composition is skewed to basic and acidic residues. Residues Ile-150–Pro-206 are disordered.

It belongs to the R-transferase family. Monomer. Interacts with LIAT1; LIAT1 is not a substrate of ATE1, the interaction takes place in the cytoplasm and seems to increase ATE1 arginyltransferase activity. In terms of assembly, interacts with LIAT1; has a higher affinity than the other isoforms. Widely expressed.

Its subcellular location is the nucleus. The protein localises to the cytoplasm. The catalysed reaction is an N-terminal L-alpha-aminoacyl-[protein] + L-arginyl-tRNA(Arg) = an N-terminal L-arginyl-L-aminoacyl-[protein] + tRNA(Arg) + H(+). Functionally, involved in the post-translational conjugation of arginine to the N-terminal aspartate or glutamate of a protein. This arginylation is required for degradation of the protein via the ubiquitin pathway. Does not arginylate cysteine residues. This chain is Arginyl-tRNA--protein transferase 1, found in Mus musculus (Mouse).